Reading from the N-terminus, the 320-residue chain is ADP/ATP translocase 4 (320 aa).

The Mitochondrial intermembrane segment spans residues M1–S20. One copy of the Solcar 1 repeat lies at V19–L111. A helical transmembrane segment spans residues F21–Q50. Residues V51–N87 lie on the Mitochondrial matrix side of the membrane. A helical membrane pass occupies residues L88–F112. ADP-binding residues include R93 and K105. Residues M113–F122 are Mitochondrial intermembrane-facing. Residues W123–V143 form a helical membrane-spanning segment. Solcar repeat units follow at residues R124–L214 and T221–F308. The Mitochondrial matrix portion of the chain corresponds to V144 to G191. A helical membrane pass occupies residues V192–K212. Topologically, residues G213–F223 are mitochondrial intermembrane. The helical transmembrane segment at L224 to F244 threads the bilayer. Over D245–G284 the chain is Mitochondrial matrix. R248 provides a ligand contact to ADP. The tract at residues R248–M253 is important for transport activity. The Nucleotide carrier signature motif motif lies at R248–M253. A helical membrane pass occupies residues A285–Y302. Over D303–D320 the chain is Mitochondrial intermembrane.

Belongs to the mitochondrial carrier (TC 2.A.29) family. Monomer. In terms of tissue distribution, specifically expressed in undifferentiated embryonic stem cells and germ cells. Expression is down-regulated after embryonic stem cells differentiation. In adults, only expressed in developing gametes in testis. In testis, expressed at higher level in spermatocytes. Expression is probably associated with entry of the male germ cells into meiosis. Expressed at very low level in Sertoli cells.

It is found in the mitochondrion inner membrane. The protein localises to the membrane. Its subcellular location is the cell projection. It localises to the cilium. The protein resides in the flagellum membrane. It catalyses the reaction ADP(in) + ATP(out) = ADP(out) + ATP(in). The enzyme catalyses dATP(out) + ADP(in) = dATP(in) + ADP(out). The catalysed reaction is dADP(in) + ADP(out) = dADP(out) + ADP(in). It carries out the reaction H(+)(in) = H(+)(out). The matrix-open state (m-state) is inhibited by the membrane-permeable bongkrekic acid (BKA). The cytoplasmic-open state (c-state) is inhibited by the membrane-impermeable toxic inhibitor carboxyatractyloside (CATR). Proton transporter activity is inhibited by ADP:ATP antiporter activity. ADP:ATP antiporter that mediates import of ADP into the mitochondrial matrix for ATP synthesis, and export of ATP out to fuel the cell. Cycles between the cytoplasmic-open state (c-state) and the matrix-open state (m-state): operates by the alternating access mechanism with a single substrate-binding site intermittently exposed to either the cytosolic (c-state) or matrix (m-state) side of the inner mitochondrial membrane. Specifically required during spermatogenesis, probably to mediate ADP:ATP exchange in spermatocytes. Large ATP supplies from mitochondria may be critical for normal progression of spermatogenesis during early stages of meiotic prophase I, including DNA double-strand break repair and chromosomal synapsis. In addition to its ADP:ATP antiporter activity, also involved in mitochondrial uncoupling and mitochondrial permeability transition pore (mPTP) activity. Plays a role in mitochondrial uncoupling by acting as a proton transporter: proton transport uncouples the proton flows via the electron transport chain and ATP synthase to reduce the efficiency of ATP production and cause mitochondrial thermogenesis. Proton transporter activity is inhibited by ADP:ATP antiporter activity, suggesting that SLC25A31/ANT4 acts as a master regulator of mitochondrial energy output by maintaining a delicate balance between ATP production (ADP:ATP antiporter activity) and thermogenesis (proton transporter activity). Proton transporter activity requires free fatty acids as cofactor, but does not transport it. Among nucleotides, may also exchange ADP for dATP and dADP. Also plays a key role in mPTP opening, a non-specific pore that enables free passage of the mitochondrial membranes to solutes of up to 1.5 kDa, and which contributes to cell death. It is however unclear if SLC25A31/ANT4 constitutes a pore-forming component of mPTP or regulates it. In Mus musculus (Mouse), this protein is ADP/ATP translocase 4.